Reading from the N-terminus, the 356-residue chain is MSLDRIMNEAISPWMKGDGPDSDIVLSTRIRLARNLKNYHFPIMQTAEEANQITELFQQKLVNKTMRDFGSFELLKMNELTPLQRRVLVEKHLISPNLAETEFGACILSESEHISVMLNEEDHVRIQCLFPGLQLSEALQSANKIDNVFEEVVEYAFDEELGYVTSCPTNVGTGLRASVMIHLPALVLTKRINRIIQAIQQLGLVVRGIYGEGSEALGNIFQVSNQMTLGKSEEDIIADLTSVIHQLIQQEKAARELIVKNSSIELEDKVYRSYGILAHSRLIQSAEAATCLSDVRLGIDLGYIKDVSRNILTELMVLTQPGILQQYAGGQLGPEERDYRRAALIRERLRIEENEA.

Positions 24–254 (IVLSTRIRLA…HQLIQQEKAA (231 aa)) constitute a Phosphagen kinase C-terminal domain. ATP-binding positions include 27–31 (STRIR), H92, R125, 176–180 (RASVM), and 207–212 (RGIYGE). Residues 337–342 (RDYRRA) carry the RDXXRA motif of the pArg binding pocket involved in allosteric regulation motif.

Belongs to the ATP:guanido phosphotransferase family.

The catalysed reaction is L-arginyl-[protein] + ATP = N(omega)-phospho-L-arginyl-[protein] + ADP + H(+). With respect to regulation, appears to be allosterically activated by the binding of pArg-containing polypeptides to the pArg-binding pocket localized in the C-terminal domain of McsB. In terms of biological role, catalyzes the specific phosphorylation of arginine residues in a large number of proteins. Is part of the bacterial stress response system. Protein arginine phosphorylation has a physiologically important role and is involved in the regulation of many critical cellular processes, such as protein homeostasis, motility, competence, and stringent and stress responses, by regulating gene expression and protein activity. The chain is Protein-arginine kinase from Bacillus cytotoxicus (strain DSM 22905 / CIP 110041 / 391-98 / NVH 391-98).